A 353-amino-acid chain; its full sequence is UPF0283 membrane protein YcjF (353 aa).

3 helical membrane-spanning segments follow: residues 70-90 (MVMGGLALFGASVVGQGVQWT), 100-120 (VALGGCAAGALIVGAGVGSVV), and 213-233 (ESTLMIAVSPLALVDMAFIAW).

It belongs to the UPF0283 family.

The protein resides in the cell inner membrane. This chain is UPF0283 membrane protein YcjF, found in Salmonella schwarzengrund (strain CVM19633).